The primary structure comprises 604 residues: Sulfite reductase [NADPH] flavoprotein alpha-component (604 aa).

The 139-residue stretch at 68–206 (LSIIFASQTG…PAAEWRKQAL (139 aa)) folds into the Flavodoxin-like domain. Residues 74–79 (SQTGNA), 121–124 (STNG), and 157–166 (LGDSSYEFFC) each bind FMN. Residues 239–453 (QNPYTATLLT…VEHNNNFKLP (215 aa)) enclose the FAD-binding FR-type domain. Residues Thr327, Gly361, 391–394 (RLYS), 409–411 (TVG), Tyr415, and 424–427 (GGAS) each bind FAD. NADP(+) is bound by residues 524–525 (SR), 530–534 (KVYVQ), and Asp566. Tyr604 is a binding site for FAD.

It belongs to the NADPH-dependent sulphite reductase flavoprotein subunit CysJ family. The protein in the N-terminal section; belongs to the flavodoxin family. In the C-terminal section; belongs to the flavoprotein pyridine nucleotide cytochrome reductase family. As to quaternary structure, alpha(8)-beta(8). The alpha component is a flavoprotein, the beta component is a hemoprotein. FAD serves as cofactor. FMN is required as a cofactor.

The catalysed reaction is hydrogen sulfide + 3 NADP(+) + 3 H2O = sulfite + 3 NADPH + 4 H(+). The protein operates within sulfur metabolism; hydrogen sulfide biosynthesis; hydrogen sulfide from sulfite (NADPH route): step 1/1. Functionally, component of the sulfite reductase complex that catalyzes the 6-electron reduction of sulfite to sulfide. This is one of several activities required for the biosynthesis of L-cysteine from sulfate. The flavoprotein component catalyzes the electron flow from NADPH -&gt; FAD -&gt; FMN to the hemoprotein component. This Aliivibrio fischeri (strain ATCC 700601 / ES114) (Vibrio fischeri) protein is Sulfite reductase [NADPH] flavoprotein alpha-component.